The sequence spans 475 residues: Sulfate adenylyltransferase subunit 1 (475 aa).

A tr-type G domain is found at 25–239 (KSLLRFLTCG…EVLETVEIQR (215 aa)). Positions 34-41 (GSVDDGKS) are G1. Residue 34–41 (GSVDDGKS) coordinates GTP. The interval 92 to 96 (GITID) is G2. The interval 113 to 116 (DTPG) is G3. GTP is bound by residues 113 to 117 (DTPGH) and 168 to 171 (NKMD). The segment at 168–171 (NKMD) is G4. Positions 206 to 208 (SAL) are G5.

It belongs to the TRAFAC class translation factor GTPase superfamily. Classic translation factor GTPase family. CysN/NodQ subfamily. As to quaternary structure, heterodimer composed of CysD, the smaller subunit, and CysN.

The enzyme catalyses sulfate + ATP + H(+) = adenosine 5'-phosphosulfate + diphosphate. It functions in the pathway sulfur metabolism; hydrogen sulfide biosynthesis; sulfite from sulfate: step 1/3. With CysD forms the ATP sulfurylase (ATPS) that catalyzes the adenylation of sulfate producing adenosine 5'-phosphosulfate (APS) and diphosphate, the first enzymatic step in sulfur assimilation pathway. APS synthesis involves the formation of a high-energy phosphoric-sulfuric acid anhydride bond driven by GTP hydrolysis by CysN coupled to ATP hydrolysis by CysD. In Escherichia coli O17:K52:H18 (strain UMN026 / ExPEC), this protein is Sulfate adenylyltransferase subunit 1.